Reading from the N-terminus, the 293-residue chain is Diaminopimelate epimerase (293 aa).

Substrate is bound by residues N13, Q46, and N66. C75 (proton donor) is an active-site residue. Substrate contacts are provided by residues 76–77 (GN), N162, N195, and 213–214 (ER). C222 (proton acceptor) is an active-site residue. Position 223 to 224 (223 to 224 (GT)) interacts with substrate.

Belongs to the diaminopimelate epimerase family. In terms of assembly, homodimer.

It is found in the cytoplasm. The catalysed reaction is (2S,6S)-2,6-diaminopimelate = meso-2,6-diaminopimelate. It participates in amino-acid biosynthesis; L-lysine biosynthesis via DAP pathway; DL-2,6-diaminopimelate from LL-2,6-diaminopimelate: step 1/1. Catalyzes the stereoinversion of LL-2,6-diaminopimelate (L,L-DAP) to meso-diaminopimelate (meso-DAP), a precursor of L-lysine and an essential component of the bacterial peptidoglycan. This chain is Diaminopimelate epimerase, found in Psychrobacter sp. (strain PRwf-1).